Consider the following 194-residue polypeptide: Imidazoleglycerol-phosphate dehydratase (194 aa).

The protein belongs to the imidazoleglycerol-phosphate dehydratase family.

The protein resides in the cytoplasm. It catalyses the reaction D-erythro-1-(imidazol-4-yl)glycerol 3-phosphate = 3-(imidazol-4-yl)-2-oxopropyl phosphate + H2O. The protein operates within amino-acid biosynthesis; L-histidine biosynthesis; L-histidine from 5-phospho-alpha-D-ribose 1-diphosphate: step 6/9. This Sulfurisphaera tokodaii (strain DSM 16993 / JCM 10545 / NBRC 100140 / 7) (Sulfolobus tokodaii) protein is Imidazoleglycerol-phosphate dehydratase.